The sequence spans 282 residues: Formamidopyrimidine-DNA glycosylase (282 aa).

Catalysis depends on P2, which acts as the Schiff-base intermediate with DNA. Residue E3 is the Proton donor of the active site. Catalysis depends on K60, which acts as the Proton donor; for beta-elimination activity. DNA-binding residues include H99, R118, and K163. Residues 248–282 (WVYRRSGKNCKKCGEKILREKICGRSTHWCPNCQK) form an FPG-type zinc finger. The Proton donor; for delta-elimination activity role is filled by R272.

This sequence belongs to the FPG family. As to quaternary structure, monomer. It depends on Zn(2+) as a cofactor.

It catalyses the reaction Hydrolysis of DNA containing ring-opened 7-methylguanine residues, releasing 2,6-diamino-4-hydroxy-5-(N-methyl)formamidopyrimidine.. It carries out the reaction 2'-deoxyribonucleotide-(2'-deoxyribose 5'-phosphate)-2'-deoxyribonucleotide-DNA = a 3'-end 2'-deoxyribonucleotide-(2,3-dehydro-2,3-deoxyribose 5'-phosphate)-DNA + a 5'-end 5'-phospho-2'-deoxyribonucleoside-DNA + H(+). In terms of biological role, involved in base excision repair of DNA damaged by oxidation or by mutagenic agents. Acts as a DNA glycosylase that recognizes and removes damaged bases. Has a preference for oxidized purines, such as 7,8-dihydro-8-oxoguanine (8-oxoG). Has AP (apurinic/apyrimidinic) lyase activity and introduces nicks in the DNA strand. Cleaves the DNA backbone by beta-delta elimination to generate a single-strand break at the site of the removed base with both 3'- and 5'-phosphates. This Prochlorococcus marinus (strain NATL2A) protein is Formamidopyrimidine-DNA glycosylase.